A 249-amino-acid polypeptide reads, in one-letter code: MIHSLPSPEPFVILAMPRTGTHYLEALLNDHPNILSNGELLNSYDENWPDKDRLRHSDRELLELAYMRYPPAKKKVTHVGCKINEPQFYERPGFFDELARWQGLKVILLTRNTLESLRSLVQARQTGQWLKFSPDRNEPPSVSLSVNECEAYFKAADDFHARVKDAFDPSKLLMIEYQDLLLKPSACLAAVLAFLGAPAHRFSNRATIQRQETRSLARSLRNFVELRRHFAGGPYAKFFELDDASAPQG.

Its function is as follows. Required for the formation of sulfated nod factor. Proposed to transfer activated sulfate (PAPS) to a N-acetylglucosamine of the nod factor. This chain is Nodulation protein H (nodH), found in Rhizobium tropici.